The following is a 344-amino-acid chain: tRNA(Ile)-lysidine synthase (344 aa).

35–40 (SGGPDS) provides a ligand contact to ATP.

Belongs to the tRNA(Ile)-lysidine synthase family.

It localises to the cytoplasm. It catalyses the reaction cytidine(34) in tRNA(Ile2) + L-lysine + ATP = lysidine(34) in tRNA(Ile2) + AMP + diphosphate + H(+). Ligates lysine onto the cytidine present at position 34 of the AUA codon-specific tRNA(Ile) that contains the anticodon CAU, in an ATP-dependent manner. Cytidine is converted to lysidine, thus changing the amino acid specificity of the tRNA from methionine to isoleucine. This chain is tRNA(Ile)-lysidine synthase, found in Methylobacterium sp. (strain 4-46).